A 427-amino-acid chain; its full sequence is Histidine--tRNA ligase (427 aa).

This sequence belongs to the class-II aminoacyl-tRNA synthetase family. Homodimer.

The protein localises to the cytoplasm. The enzyme catalyses tRNA(His) + L-histidine + ATP = L-histidyl-tRNA(His) + AMP + diphosphate + H(+). This is Histidine--tRNA ligase from Deinococcus radiodurans (strain ATCC 13939 / DSM 20539 / JCM 16871 / CCUG 27074 / LMG 4051 / NBRC 15346 / NCIMB 9279 / VKM B-1422 / R1).